We begin with the raw amino-acid sequence, 185 residues long: Ribosome-recycling factor (185 aa).

The protein belongs to the RRF family.

The protein localises to the cytoplasm. Responsible for the release of ribosomes from messenger RNA at the termination of protein biosynthesis. May increase the efficiency of translation by recycling ribosomes from one round of translation to another. The sequence is that of Ribosome-recycling factor from Streptococcus thermophilus (strain CNRZ 1066).